The sequence spans 143 residues: Nucleoside diphosphate kinase (143 aa).

ATP contacts are provided by lysine 11, phenylalanine 59, arginine 87, threonine 93, arginine 104, and asparagine 114. The active-site Pros-phosphohistidine intermediate is histidine 117.

The protein belongs to the NDK family. Homotetramer. Requires Mg(2+) as cofactor.

It is found in the cytoplasm. It carries out the reaction a 2'-deoxyribonucleoside 5'-diphosphate + ATP = a 2'-deoxyribonucleoside 5'-triphosphate + ADP. The enzyme catalyses a ribonucleoside 5'-diphosphate + ATP = a ribonucleoside 5'-triphosphate + ADP. Its function is as follows. Major role in the synthesis of nucleoside triphosphates other than ATP. The ATP gamma phosphate is transferred to the NDP beta phosphate via a ping-pong mechanism, using a phosphorylated active-site intermediate. The chain is Nucleoside diphosphate kinase from Tolumonas auensis (strain DSM 9187 / NBRC 110442 / TA 4).